The primary structure comprises 303 residues: MESALPSIFTLVIIAEFIIGNLSNGFIVLINCIDWVSKRELSSVDKLLIILAISRIGLIWEILVSWFLALHYLAIFVSGTGLRIMIFSWIVSNHFNLWLATIFSIFYLLKIASFSSPAFLYLKWRVNKVILMILLGTLVFLFLNLIQINMHIKDWLDRYERNTTWNFSMSDFETFSVSVKFTMTMFSLTPFTVAFISFLLLIFSLQKHLQKMQLNYKGHRDPRTKVHTNALKIVISFLLFYASFFLCVLISWISELYQNTVIYMLCETIGVFSPSSHSFLLILGNAKLRQAFLLVAAKVWAKR.

The Extracellular segment spans residues 1–7 (MESALPS). A helical transmembrane segment spans residues 8-28 (IFTLVIIAEFIIGNLSNGFIV). The Cytoplasmic segment spans residues 29-55 (LINCIDWVSKRELSSVDKLLIILAISR). The chain crosses the membrane as a helical span at residues 56 to 76 (IGLIWEILVSWFLALHYLAIF). Residues 77-85 (VSGTGLRIM) are Extracellular-facing. A helical transmembrane segment spans residues 86-106 (IFSWIVSNHFNLWLATIFSIF). Residues 107-128 (YLLKIASFSSPAFLYLKWRVNK) lie on the Cytoplasmic side of the membrane. The helical transmembrane segment at 129–149 (VILMILLGTLVFLFLNLIQIN) threads the bilayer. Residues 150–184 (MHIKDWLDRYERNTTWNFSMSDFETFSVSVKFTMT) are Extracellular-facing. N-linked (GlcNAc...) asparagine glycosylation is found at asparagine 162 and asparagine 166. The chain crosses the membrane as a helical span at residues 185 to 205 (MFSLTPFTVAFISFLLLIFSL). The Cytoplasmic portion of the chain corresponds to 206–232 (QKHLQKMQLNYKGHRDPRTKVHTNALK). The chain crosses the membrane as a helical span at residues 233 to 253 (IVISFLLFYASFFLCVLISWI). Over 254 to 261 (SELYQNTV) the chain is Extracellular. A helical membrane pass occupies residues 262–282 (IYMLCETIGVFSPSSHSFLLI). Over 283–303 (LGNAKLRQAFLLVAAKVWAKR) the chain is Cytoplasmic.

Belongs to the G-protein coupled receptor T2R family. As to expression, expressed in subsets of taste receptor cells of the tongue and palate epithelium and exclusively in gustducin-positive cells.

The protein localises to the membrane. Functionally, receptor that may play a role in the perception of bitterness and is gustducin-linked. May play a role in sensing the chemical composition of the gastrointestinal content. The activity of this receptor may stimulate alpha gustducin, mediate PLC-beta-2 activation and lead to the gating of TRPM5. This Homo sapiens (Human) protein is Taste receptor type 2 member 13 (TAS2R13).